The sequence spans 718 residues: Mitotic spindle assembly checkpoint protein MAD1 (718 aa).

Met1 carries the post-translational modification N-acetylmethionine. Ser16 carries the phosphoserine modification. The stretch at 46-632 forms a coiled coil; sequence QQSMQLEERA…QTKIQEFRKA (587 aa). Lys61 is subject to N6-acetyllysine; alternate. A Glycyl lysine isopeptide (Lys-Gly) (interchain with G-Cter in SUMO2); alternate cross-link involves residue Lys61. Positions 79-82 match the Nuclear localization signal motif; the sequence is KRAR. Position 214 is a phosphoserine (Ser214). The tract at residues 301–340 is important for interaction with IK; the sequence is VGLELENERLLAKLQSWERLDQTMGLSIRTPEDLSRFVVE. The tract at residues 380 to 532 is necessary for interaction with NEK2; the sequence is LLEERKKRET…EAQLERRALQ (153 aa). Position 428 is a phosphoserine (Ser428). The important for interaction with IK stretch occupies residues 439–480; sequence EDMVQKVHSHSAEMEAQLSQALEELGGQKQRADMLEMELKML. The tract at residues 540-551 is necessary for interaction with MAD2L1; sequence TKVLHMSLNPTS. 2 positions are modified to phosphoserine: Ser598 and Ser610. Tyr634 is subject to Phosphotyrosine. At Thr716 the chain carries Phosphothreonine.

Belongs to the MAD1 family. As to quaternary structure, homodimer. Dimerizes via its N- and C- terminal regions. Heterodimerizes with MAD2L1 in order to form a tetrameric MAD1L1-MAD2L1 core complex. Interacts with the closed conformation form of MAD2L1 (C-MAD2) and open conformation form of MAD2L1 (O-MAD2). It is unclear whether MAD1L1 dimerization promotes the conversion of closed to open conformation of MAD2L1. Formation of a heterotetrameric core complex containing two molecules each of MAD1L1 and of MAD2L1 promotes binding of another molecule of MAD2L1 to each MAD2L1, resulting in a heterohexamer. Perturbation of the original MAD1L1-MAD2L1 structure by the spindle checkpoint may decrease MAD2L1 affinity for MAD1L1. CDC20 can compete with MAD1L1 for MAD2L1 binding, until the attachment and/or tension dampen the checkpoint signal, preventing further release of MAD2L1 on to CDC20. Also able to interact with the BUB1/BUB3 complex. Interacts with NEK2. Interacts with TTK. Interacts with TPR; the interactions occurs in a microtubule-independent manner. Interacts with IK. Interacts with the viral Tax protein. Interacts with PRAP1. Interacts with MAD2L1; this interaction leads to the cytoplasmic sequestration of MAD2L1. Interacts with PRAP1. In terms of processing, phosphorylated; by BUB1. Become hyperphosphorylated in late S through M phases or after mitotic spindle damage. Phosphorylated; by TTK. As to expression, expressed in hepatocellular carcinomas and hepatoma cell lines (at protein level).

It is found in the nucleus. Its subcellular location is the chromosome. The protein resides in the centromere. The protein localises to the kinetochore. It localises to the nucleus envelope. It is found in the cytoplasm. Its subcellular location is the cytoskeleton. The protein resides in the microtubule organizing center. The protein localises to the centrosome. It localises to the spindle. It is found in the spindle pole. Its function is as follows. Component of the spindle-assembly checkpoint that prevents the onset of anaphase until all chromosomes are properly aligned at the metaphase plate. Forms a heterotetrameric complex with the closed conformation form of MAD2L1 (C-MAD2) at unattached kinetochores during prometaphase, recruits an open conformation of MAD2L1 (O-MAD2) and promotes the conversion of O-MAD2 to C-MAD2, which ensures mitotic checkpoint signaling. In terms of biological role, sequesters MAD2L1 in the cytoplasm preventing its function as an activator of the mitotic spindle assembly checkpoint (SAC) resulting in SAC impairment and chromosomal instability in hepatocellular carcinomas. The polypeptide is Mitotic spindle assembly checkpoint protein MAD1 (MAD1L1) (Homo sapiens (Human)).